The primary structure comprises 288 residues: Small ribosomal subunit protein uS2 (288 aa).

This sequence belongs to the universal ribosomal protein uS2 family. Component of the small ribosomal subunit. Mature ribosomes consist of a small (40S) and a large (60S) subunit. The 40S subunit contains about 33 different proteins and 1 molecule of RNA (18S). The 60S subunit contains about 49 different proteins and 3 molecules of RNA (28S, 5.8S and 5S). Interacts with ribosomal protein S21.

It is found in the cytoplasm. In terms of biological role, required for the assembly and/or stability of the 40S ribosomal subunit. Required for the processing of the 20S rRNA-precursor to mature 18S rRNA in a late step of the maturation of 40S ribosomal subunits. The sequence is that of Small ribosomal subunit protein uS2 from Aedes aegypti (Yellowfever mosquito).